An 860-amino-acid chain; its full sequence is Alanine--tRNA ligase (860 aa).

4 residues coordinate Zn(2+): His563, His567, Cys665, and His669.

The protein belongs to the class-II aminoacyl-tRNA synthetase family. Requires Zn(2+) as cofactor.

The protein resides in the cytoplasm. The enzyme catalyses tRNA(Ala) + L-alanine + ATP = L-alanyl-tRNA(Ala) + AMP + diphosphate. Its function is as follows. Catalyzes the attachment of alanine to tRNA(Ala) in a two-step reaction: alanine is first activated by ATP to form Ala-AMP and then transferred to the acceptor end of tRNA(Ala). Also edits incorrectly charged Ser-tRNA(Ala) and Gly-tRNA(Ala) via its editing domain. This Vibrio parahaemolyticus serotype O3:K6 (strain RIMD 2210633) protein is Alanine--tRNA ligase.